We begin with the raw amino-acid sequence, 234 residues long: MKADAKQITHLLKPLRLLLLGAPGSGKGTQTSRLLKQIPQLSSISSGDILRQEIKSESTLGREATTYIAQGKLLPDDLITRLITFRLSALGWLKPSAMWLLDGFPRTTAQASALDELLKQHDASLNLVVELDVPESTILERIENRYVHVPSGRVYNLQYNPPKVPGLDDITGEPLTKRLDDTAEVFKKRLEEYKKTNEPLKDYYKKSGIFGTVSGETSDIIFPKLLNLITSKFG.

24–29 is a binding site for GTP; sequence GSGKGT. The interval 45–74 is NMP; sequence SSGDILRQEIKSESTLGREATTYIAQGKLL. Residues Ser46, Arg51, 72-74, 103-106, and Gln110 each bind AMP; these read KLL and GFPR. An LID region spans residues 144–181; sequence NRYVHVPSGRVYNLQYNPPKVPGLDDITGEPLTKRLDD. GTP-binding positions include Arg145 and 154 to 155; that span reads VY. Residues Arg178 and Arg189 each coordinate AMP. Residue Ser218 participates in GTP binding.

Belongs to the adenylate kinase family. AK3 subfamily. In terms of assembly, monomer.

It is found in the mitochondrion matrix. It catalyses the reaction a ribonucleoside 5'-triphosphate + AMP = a ribonucleoside 5'-diphosphate + ADP. Involved in maintaining the homeostasis of cellular nucleotides by catalyzing the interconversion of nucleoside phosphates. Has GTP:AMP phosphotransferase and ITP:AMP phosphotransferase activities. Does not accept ATP as phosphate donor. The polypeptide is GTP:AMP phosphotransferase, mitochondrial (Saccharomyces cerevisiae (Baker's yeast)).